A 60-amino-acid polypeptide reads, in one-letter code: Putative insect toxin Acra6 (60 aa).

The LCN-type CS-alpha/beta domain occupies 2-60 (RDGYIRRKDEFKFKCYVDGKDCDDVCKSEGGSAGYCTALGFLCYCAGLPDDKAWKPTSS). Intrachain disulfides connect C16-C37, C23-C44, and C27-C46.

Belongs to the long (4 C-C) scorpion toxin superfamily. Sodium channel inhibitor family. Beta subfamily. As to expression, expressed by the venom gland.

It localises to the secreted. Depressant insect toxins cause a transient contraction paralysis followed by a slow flaccid paralysis. They bind voltage-independently to sodium channels (Nav) and block action potentials, primarily by depolarizing the axonal membrane and suppressing the sodium current. The sequence is that of Putative insect toxin Acra6 from Androctonus crassicauda (Arabian fat-tailed scorpion).